The chain runs to 241 residues: Ribonuclease HII (241 aa).

The region spanning 27–227 (GPVAGVDEAG…REARSLRLED (201 aa)) is the RNase H type-2 domain. The a divalent metal cation site is built by Asp-33, Glu-34, and Asp-128.

The protein belongs to the RNase HII family. The cofactor is Mn(2+). Mg(2+) serves as cofactor.

Its subcellular location is the cytoplasm. The catalysed reaction is Endonucleolytic cleavage to 5'-phosphomonoester.. Endonuclease that specifically degrades the RNA of RNA-DNA hybrids. The polypeptide is Ribonuclease HII (Frankia alni (strain DSM 45986 / CECT 9034 / ACN14a)).